The following is a 795-amino-acid chain: Mitochondrial inner membrane m-AAA protease component paraplegin (795 aa).

A mitochondrion-targeting transit peptide spans 1–43 (MAVLLLLLRALRRGPGPGPRPLWGPGPAWSPGFPARPGRGRPY). The propeptide at 44–105 (MASRPPGDLA…GGTFYFNTSR (62 aa)) is removed in mature form. At 106–144 (LKQKNKEKDKSKGKAPEEDEEERRRRERDDQMYRERLRT) the chain is on the mitochondrial matrix side. A disordered region spans residues 108 to 133 (QKNKEKDKSKGKAPEEDEEERRRRER). The segment covering 109–133 (KNKEKDKSKGKAPEEDEEERRRRER) has biased composition (basic and acidic residues). A helical transmembrane segment spans residues 145-165 (LLVIAVVMSLLNALSTSGGSI). Topologically, residues 166-248 (SWNDFVHEML…DRIPVSYKRT (83 aa)) are mitochondrial intermembrane. A helical membrane pass occupies residues 249 to 269 (GFFGNALYSVGMTAVGLAILW). The Mitochondrial matrix portion of the chain corresponds to 270 to 795 (YVFRLAGMTG…LGGEEPTWPK (526 aa)). ATP-binding residues include Ala312, Gly352, Cys353, Gly354, Lys355, Thr356, and Leu357. A 3'-nitrotyrosine modification is found at Tyr505. His574 lines the Zn(2+) pocket. Glu575 is an active-site residue. Zn(2+) contacts are provided by His578 and Asp650. The interval 701–795 (HEARLLVAKA…LGGEEPTWPK (95 aa)) is interaction with PPIF. Residues 751 to 795 (PHGPKKMIAPQRWIDAQREKQDLGEEETEETQQPPLGGEEPTWPK) are disordered.

This sequence in the N-terminal section; belongs to the AAA ATPase family. The protein in the C-terminal section; belongs to the peptidase M41 family. Forms heterooligomers with AFG3L2; the m-AAA protease is composed of heterohexamers of AFG3L2 and SPG7. Component of the mitochondrial permeability transition pore complex (mPTPC), at least composed of SPG7, VDAC1 and PPIF. Interacts with MAIP1. Zn(2+) is required as a cofactor. In terms of processing, upon import into the mitochondrion, the N-terminal transit peptide is cleaved by the mitochondrial-processing peptidase (MPP) to generate an intermediate form which undergoes a second proteolytic cleavage mediated by proteases AFG3L2 removing an additional N-terminal fragment to generate the proteolytically active mature form. Ubiquitous.

Its subcellular location is the mitochondrion inner membrane. The enzyme catalyses ATP + H2O = ADP + phosphate + H(+). Catalytic component of the m-AAA protease, a protease that plays a key role in proteostasis of inner mitochondrial membrane proteins, and which is essential for axonal and neuron development. SPG7 possesses both ATPase and protease activities: the ATPase activity is required to unfold substrates, threading them into the internal proteolytic cavity for hydrolysis into small peptide fragments. The m-AAA protease exerts a dual role in the mitochondrial inner membrane: it mediates the processing of specific regulatory proteins and ensures protein quality control by degrading misfolded polypeptides. Mediates protein maturation of the mitochondrial ribosomal subunit MRPL32/bL32m by catalyzing the cleavage of the presequence of MRPL32/bL32m prior to assembly into the mitochondrial ribosome. Acts as a regulator of calcium in neurons by mediating degradation of SMDT1/EMRE before its assembly with the uniporter complex, limiting the availability of SMDT1/EMRE for MCU assembly and promoting efficient assembly of gatekeeper subunits with MCU. Also regulates mitochondrial calcium by catalyzing degradation of MCU. Plays a role in the formation and regulation of the mitochondrial permeability transition pore (mPTP) and its proteolytic activity is dispensable for this function. In Homo sapiens (Human), this protein is Mitochondrial inner membrane m-AAA protease component paraplegin.